Here is a 134-residue protein sequence, read N- to C-terminus: S-protein homolog 18 (134 aa).

The N-terminal stretch at 1 to 25 is a signal peptide; the sequence is MCPSSFRLILSVILIAFLFVGLCEA. N-linked (GlcNAc...) asparagine glycosylation occurs at Asn87.

This sequence belongs to the plant self-incompatibility (S1) protein family.

The protein resides in the secreted. This Arabidopsis thaliana (Mouse-ear cress) protein is S-protein homolog 18.